A 406-amino-acid chain; its full sequence is RNA exonuclease 4 (406 aa).

The segment covering 1–10 has biased composition (polar residues); that stretch reads MAPELSSNWK. Disordered regions lie at residues 1-108 and 156-181; these read MAPE…TLPS and AGLT…PTDL. Low complexity-rich tracts occupy residues 54 to 64, 72 to 82, and 94 to 108; these read SQQQQQASNPS, SQTQSQPSSQK, and SKPT…TLPS. Residues 162–173 are compositionally biased toward polar residues; sequence GHSSSSPKSNKN. An Exonuclease domain is found at 216–367; that stretch reads YLSIDCEMVG…EDARVAMLLF (152 aa). Residues 377–387 show a composition bias toward basic and acidic residues; it reads ENSNRYEEGQA. Positions 377–406 are disordered; that stretch reads ENSNRYEEGQAKKGGNGGGGGGGKKKKGKK. Gly residues predominate over residues 388 to 398; that stretch reads KKGGNGGGGGG.

It belongs to the REXO4 family.

Its subcellular location is the nucleus. In terms of biological role, exoribonuclease involved in ribosome biosynthesis. Involved in the processing of ITS1, the internal transcribed spacer localized between the 18S and 5.8S rRNAs. The sequence is that of RNA exonuclease 4 (rex-4) from Neurospora crassa (strain ATCC 24698 / 74-OR23-1A / CBS 708.71 / DSM 1257 / FGSC 987).